Reading from the N-terminus, the 115-residue chain is NADH-ubiquinone oxidoreductase chain 3 (115 aa).

3 consecutive transmembrane segments (helical) span residues methionine 1–leucine 21, isoleucine 58–isoleucine 78, and isoleucine 84–tyrosine 104.

Belongs to the complex I subunit 3 family.

It is found in the mitochondrion membrane. The enzyme catalyses a ubiquinone + NADH + 5 H(+)(in) = a ubiquinol + NAD(+) + 4 H(+)(out). Its function is as follows. Core subunit of the mitochondrial membrane respiratory chain NADH dehydrogenase (Complex I) that is believed to belong to the minimal assembly required for catalysis. Complex I functions in the transfer of electrons from NADH to the respiratory chain. The immediate electron acceptor for the enzyme is believed to be ubiquinone. The protein is NADH-ubiquinone oxidoreductase chain 3 (ND3) of Locusta migratoria (Migratory locust).